Reading from the N-terminus, the 240-residue chain is Homeobox-leucine zipper protein HOX14 (240 aa).

The disordered stretch occupies residues 26-64 (SGEVQGERPRARRRRRRGARCVGGGGGGGEVDGGDPKKR). A compositionally biased stretch (basic residues) spans 35–44 (RARRRRRRGA). Gly residues predominate over residues 46–56 (CVGGGGGGGEV). Residues 59 to 118 (GDPKKRRLSDEQVEMLELSFREERKLETGRKVHLASELGLDPKQVAVWFQNRRARHKSKL) constitute a DNA-binding region (homeobox). A coiled-coil region spans residues 108–167 (QNRRARHKSKLLEEEFSKLKHAHDAAILHKCHLENEVLRLKERLVVAEEEVRRLRSAAGS).

Belongs to the HD-ZIP homeobox family. Class I subfamily. In terms of tissue distribution, expressed in roots, stems, leaf blades and panicles.

It is found in the nucleus. Its function is as follows. Probable transcription factor. This Oryza sativa subsp. japonica (Rice) protein is Homeobox-leucine zipper protein HOX14 (HOX14).